The chain runs to 213 residues: uncharacterized protein (213 aa).

Residues 1–21 (MKKILFLTVICFCLSSIKAYA) form the signal peptide.

This is an uncharacterized protein from Rickettsia prowazekii (strain Madrid E).